A 202-amino-acid chain; its full sequence is Protein EMBRYO DEFECTIVE 514 (202 aa).

Disordered stretches follow at residues 1-69 (MAEE…PVKL) and 168-202 (MKTP…RFRR). Residue Ala-2 is modified to N-acetylalanine. Composition is skewed to basic and acidic residues over residues 33–42 (ETGDEKRERE) and 51–65 (GESK…EKSG). The segment covering 174 to 202 (NGNGHGGGRGGGGGRRGGRGGGRGGRFRR) has biased composition (gly residues).

Expressed in leaves, flowers and embryos at globular stage.

It localises to the nucleus. In terms of biological role, may play a role in ribosome biogenesis and in determining the rate of cell division. Involved in a process essential for nuclear and nucleolar functions. In Arabidopsis thaliana (Mouse-ear cress), this protein is Protein EMBRYO DEFECTIVE 514.